A 224-amino-acid polypeptide reads, in one-letter code: UPF0758 protein BPUM_2444 (224 aa).

In terms of domain architecture, MPN spans 102–224 (VIRTPEDGAN…FVSLKEKGYL (123 aa)). Zn(2+) is bound by residues histidine 173, histidine 175, and aspartate 186. The JAMM motif signature appears at 173-186 (HNHPSGDPTPSRED).

This sequence belongs to the UPF0758 family.

The sequence is that of UPF0758 protein BPUM_2444 from Bacillus pumilus (strain SAFR-032).